Consider the following 289-residue polypeptide: Shikimate dehydrogenase (NADP(+)) (289 aa).

Shikimate is bound by residues 19-21 and Thr66; that span reads SLS. Lys70 acts as the Proton acceptor in catalysis. Residues Asn91 and Asp106 each coordinate shikimate. Residues 131-135 and Leu229 contribute to the NADP(+) site; that span reads GNGGA. Tyr231 is a shikimate binding site. Position 252 (Gly252) interacts with NADP(+).

The protein belongs to the shikimate dehydrogenase family. As to quaternary structure, homodimer.

The enzyme catalyses shikimate + NADP(+) = 3-dehydroshikimate + NADPH + H(+). Its pathway is metabolic intermediate biosynthesis; chorismate biosynthesis; chorismate from D-erythrose 4-phosphate and phosphoenolpyruvate: step 4/7. Functionally, involved in the biosynthesis of the chorismate, which leads to the biosynthesis of aromatic amino acids. Catalyzes the reversible NADPH linked reduction of 3-dehydroshikimate (DHSA) to yield shikimate (SA). In Trichormus variabilis (strain ATCC 29413 / PCC 7937) (Anabaena variabilis), this protein is Shikimate dehydrogenase (NADP(+)).